A 369-amino-acid polypeptide reads, in one-letter code: Endophilin-A (369 aa).

The region spanning 18–248 (TEKMGGAEGT…LQEKRSEAES (231 aa)) is the BAR domain. The stretch at 227–247 (QCADVLRGLQETLQEKRSEAE) forms a coiled coil. The disordered stretch occupies residues 266–295 (GGGGGLNEDGTPSHISSSASPLPSPMRSPA). Residues 277–294 (PSHISSSASPLPSPMRSP) are compositionally biased toward low complexity. Residues 305 to 364 (QQQPCCQALYDFEPENPGELAFKENDIITLLNRVDDNWFEGAVNGRTGYFPQSYVQVQVP) form the SH3 domain.

Belongs to the endophilin family.

The protein localises to the cytoplasm. The protein resides in the membrane. Its function is as follows. Required presynaptically at the neuromuscular junction. Implicated in synaptic vesicle endocytosis. This chain is Endophilin-A, found in Drosophila erecta (Fruit fly).